Reading from the N-terminus, the 167-residue chain is Transcriptional regulator MraZ (167 aa).

2 consecutive SpoVT-AbrB domains span residues 8–51 (ESHH…YGDH) and 92–135 (SLPT…KPET).

This sequence belongs to the MraZ family. Forms oligomers.

It localises to the cytoplasm. The protein localises to the nucleoid. This Ruegeria sp. (strain TM1040) (Silicibacter sp.) protein is Transcriptional regulator MraZ.